A 388-amino-acid polypeptide reads, in one-letter code: Succinate--CoA ligase [ADP-forming] subunit beta (388 aa).

The 236-residue stretch at 9 to 244 folds into the ATP-grasp domain; sequence KSLFAEYGLP…PSQDDAREAH (236 aa). ATP-binding positions include lysine 46, 53–55, glutamate 99, threonine 102, and glutamate 107; that span reads GRG. Asparagine 199 and aspartate 213 together coordinate Mg(2+). Residues asparagine 264 and 321 to 323 contribute to the substrate site; that span reads GIV.

This sequence belongs to the succinate/malate CoA ligase beta subunit family. As to quaternary structure, heterotetramer of two alpha and two beta subunits. Mg(2+) serves as cofactor.

The catalysed reaction is succinate + ATP + CoA = succinyl-CoA + ADP + phosphate. It catalyses the reaction GTP + succinate + CoA = succinyl-CoA + GDP + phosphate. It functions in the pathway carbohydrate metabolism; tricarboxylic acid cycle; succinate from succinyl-CoA (ligase route): step 1/1. Succinyl-CoA synthetase functions in the citric acid cycle (TCA), coupling the hydrolysis of succinyl-CoA to the synthesis of either ATP or GTP and thus represents the only step of substrate-level phosphorylation in the TCA. The beta subunit provides nucleotide specificity of the enzyme and binds the substrate succinate, while the binding sites for coenzyme A and phosphate are found in the alpha subunit. The chain is Succinate--CoA ligase [ADP-forming] subunit beta from Shewanella frigidimarina (strain NCIMB 400).